Consider the following 23-residue polypeptide: Basic phospholipase A2 mangshantoxin (23 aa).

This sequence belongs to the phospholipase A2 family. Group II subfamily. The cofactor is Ca(2+). Post-translationally, contains 7 disulfide bonds. In terms of tissue distribution, expressed by the venom gland.

Its subcellular location is the secreted. The enzyme catalyses a 1,2-diacyl-sn-glycero-3-phosphocholine + H2O = a 1-acyl-sn-glycero-3-phosphocholine + a fatty acid + H(+). In terms of biological role, snake venom phospholipase A2 (PLA2) that displays presynaptic neurotoxicity. PLA2 catalyzes the calcium-dependent hydrolysis of the 2-acyl groups in 3-sn-phosphoglycerides. The chain is Basic phospholipase A2 mangshantoxin from Protobothrops mangshanensis (Mangshan pitviper).